The chain runs to 211 residues: Ribonuclease HII (211 aa).

The RNase H type-2 domain occupies 21-211 (SSIAGLDEAG…APLKSMFDVI (191 aa)). A divalent metal cation contacts are provided by aspartate 27, glutamate 28, and aspartate 122.

It belongs to the RNase HII family. It depends on Mn(2+) as a cofactor. Mg(2+) is required as a cofactor.

The protein localises to the cytoplasm. It carries out the reaction Endonucleolytic cleavage to 5'-phosphomonoester.. Functionally, endonuclease that specifically degrades the RNA of RNA-DNA hybrids. This chain is Ribonuclease HII, found in Dehalococcoides mccartyi (strain ATCC BAA-2266 / KCTC 15142 / 195) (Dehalococcoides ethenogenes (strain 195)).